We begin with the raw amino-acid sequence, 418 residues long: Methionine aminopeptidase 2 (418 aa).

A disordered region spans residues 18-49; it reads VSEPAAVDDSEVTEDATVQDKKKKKKKKKKKG. Basic residues predominate over residues 38-49; it reads KKKKKKKKKKKG. A substrate-binding site is contributed by H172. A divalent metal cation is bound by residues D192, D203, and H272. A substrate-binding site is contributed by H280. Positions 305 and 399 each coordinate a divalent metal cation.

It belongs to the peptidase M24A family. Methionine aminopeptidase eukaryotic type 2 subfamily. Requires Co(2+) as cofactor. The cofactor is Zn(2+). Mn(2+) is required as a cofactor. It depends on Fe(2+) as a cofactor.

It is found in the cytoplasm. It catalyses the reaction Release of N-terminal amino acids, preferentially methionine, from peptides and arylamides.. In terms of biological role, cotranslationally removes the N-terminal methionine from nascent proteins. The N-terminal methionine is often cleaved when the second residue in the primary sequence is small and uncharged (Met-Ala-, Cys, Gly, Pro, Ser, Thr, or Val). This is Methionine aminopeptidase 2 from Kluyveromyces lactis (strain ATCC 8585 / CBS 2359 / DSM 70799 / NBRC 1267 / NRRL Y-1140 / WM37) (Yeast).